We begin with the raw amino-acid sequence, 331 residues long: UDP-N-acetylenolpyruvoylglucosamine reductase (331 aa).

Residues 54-221 (RVGGAAELYV…TQATFQLQPG (168 aa)) form the FAD-binding PCMH-type domain. The active site involves R200. Residue S251 is the Proton donor of the active site. E321 is an active-site residue.

This sequence belongs to the MurB family. It depends on FAD as a cofactor.

The protein localises to the cytoplasm. It catalyses the reaction UDP-N-acetyl-alpha-D-muramate + NADP(+) = UDP-N-acetyl-3-O-(1-carboxyvinyl)-alpha-D-glucosamine + NADPH + H(+). The protein operates within cell wall biogenesis; peptidoglycan biosynthesis. Its function is as follows. Cell wall formation. This Nostoc sp. (strain PCC 7120 / SAG 25.82 / UTEX 2576) protein is UDP-N-acetylenolpyruvoylglucosamine reductase.